The sequence spans 473 residues: MKSFKNKNTLRRKKAFPVFTKILLVSFLVWVLKCSNNCNNGNGSGDSFDFRNKRTLAQKQHEHHHHHHHQHQHQHQAPHQAHHHHHHGEVNHQAPQVHQQVHGQDQAHHHHHHHHHQLQPQQLQGTVANPPSNEPVVKTQVFREARPGGGFKAYEEKYESKHYKLKENVVDGKKDCDEKYEAANYAFSEECPYTVNDYSQENGPNIFALRKRFPLGMNDEDEEGKEALAIKDKLPGGLDEYQNQLYGICNETCTTCGPAAIDYVPADAPNGYAYGGSAHDGSHGNLRGHGNKGSEGYGYEAPYNPGFNGAPGSNGMQNYVPPHGAGYSAPYGVPHGAAHGSRYSSFSSVNKYGKHGDEKHHSSKKHEGNDGEGEKKKKSKKHKDHDGEKKKSKKHKDNEDAESVKSKKHKSHDCEKKKSKKHKDNEDAESVKSKKSVKEKGEKHNGKKPCSKKTNEENKNKEKTNNLKSDGSK.

The first 34 residues, 1-34 (MKSFKNKNTLRRKKAFPVFTKILLVSFLVWVLKC), serve as a signal peptide directing secretion. N-linked (GlcNAc...) asparagine glycosylation occurs at Asn-42. A compositionally biased stretch (basic residues) spans 57–87 (AQKQHEHHHHHHHQHQHQHQAPHQAHHHHHH). 2 disordered regions span residues 57–143 (AQKQ…QVFR) and 347–473 (SSVN…DGSK). Positions 95–104 (PQVHQQVHGQ) are enriched in low complexity. A compositionally biased stretch (basic residues) spans 108 to 117 (HHHHHHHHHQ). Composition is skewed to basic and acidic residues over residues 354–375 (KHGD…EGEK) and 396–405 (KDNEDAESVK). Residues 406 to 422 (SKKHKSHDCEKKKSKKH) are compositionally biased toward basic residues. Composition is skewed to basic and acidic residues over residues 423-444 (KDNE…GEKH) and 453-473 (KTNE…DGSK).

The protein resides in the secreted. Functionally, KAHRP might mimick human histidine-rich glycoproteins to anchor host thrombospondin or a parasite analog in a binding complex with the endothelial cell receptor. This chain is Knob-associated histidine-rich protein, found in Plasmodium falciparum.